A 137-amino-acid chain; its full sequence is Peptide methionine sulfoxide reductase MsrB (137 aa).

One can recognise a MsrB domain in the interval 7–129 (PDHPATELNE…NSASLSFTDG (123 aa)). Residues Cys-46, Cys-49, Cys-95, and Cys-98 each contribute to the Zn(2+) site. Cys-118 (nucleophile) is an active-site residue.

Belongs to the MsrB Met sulfoxide reductase family. Zn(2+) serves as cofactor.

The enzyme catalyses L-methionyl-[protein] + [thioredoxin]-disulfide + H2O = L-methionyl-(R)-S-oxide-[protein] + [thioredoxin]-dithiol. The polypeptide is Peptide methionine sulfoxide reductase MsrB (Serratia proteamaculans (strain 568)).